Consider the following 312-residue polypeptide: Borealin-2 (312 aa).

Basic residues predominate over residues 1–10 (MPPRKAPAKR). The interval 1-26 (MPPRKAPAKRRSTDSGVERDRGALSQ) is disordered. Residues 11–26 (RSTDSGVERDRGALSQ) show a composition bias toward basic and acidic residues.

Belongs to the borealin family. As to quaternary structure, component of the CPC complex.

It localises to the nucleus. Its subcellular location is the chromosome. It is found in the centromere. Its function is as follows. Component of the chromosomal passenger complex (CPC), a complex that acts as a key regulator of mitosis. The CPC complex has essential functions at the centromere in ensuring correct chromosome alignment and segregation and is required for chromatin-induced microtubule stabilization and spindle assembly. This is Borealin-2 from Gallus gallus (Chicken).